Consider the following 267-residue polypeptide: Cerberus (267 aa).

The first 17 residues, 1–17 (MHLLLFQLLVLLPLGKT), serve as a signal peptide directing secretion. 2 disordered regions span residues 19 to 52 (RHQDGRQNQSSLSPVLLPRNQRELPTGNHEEAEE) and 87 to 113 (WKKPEREMHPSRDSDSEPFPPGTQSLI). Residue Asn-26 is glycosylated (N-linked (GlcNAc...) asparagine). A compositionally biased stretch (basic and acidic residues) spans 88–101 (KKPEREMHPSRDSD). Intrachain disulfides connect Cys-162–Cys-209, Cys-176–Cys-223, Cys-186–Cys-239, and Cys-190–Cys-241. Residues 162–246 (CRTVPFSQTI…EECQCKVKTE (85 aa)) enclose the CTCK domain. Asn-222 is a glycosylation site (N-linked (GlcNAc...) asparagine).

This sequence belongs to the DAN family. In terms of assembly, forms monomers and predominantly dimers. Post-translationally, N-glycosylated.

It localises to the secreted. Functionally, cytokine that may play a role in anterior neural induction and somite formation during embryogenesis in part through a BMP-inhibitory mechanism. Can regulate Nodal signaling during gastrulation as well as the formation and patterning of the primitive streak. The protein is Cerberus (CER1) of Homo sapiens (Human).